The chain runs to 418 residues: MTSTLPTANTPDPASLMPSVRPEAHGRYGRYGGQYVPETLMPALAELEQAAAEAWKDSAFTTELNRLLKSYVGRATPLYEAERLSAHYRRSDGGPRIWLKREDLNHTGAHKINNALGQALLALRMGKKRIIAETGAGQHGVATATVCARFGLECVVYMGAEDMRRQALNVFRMRLLGATVQAVTAGTATLKDATSEAIRDWVTNVETTHYILGSVAGPHPYPMLVRDFHAVIGNEAREQCKESFGRLPDVLLACVGGGSNAMGLFHPFVQDTSVRLIGVEAAGDGVATGRHAATITEGRVGVLHGAMSLLLQDQDGQVQEAHSISAGLDYPGVGPEHSYLRDIGRAEYGAVTDDEAITALRLVSELEGIIPALETAHAFAWLEMLCPTLPNGSEIVINCSGRGDKDVNTVAEKLGNQL.

Positions 1–12 (MTSTLPTANTPD) are enriched in polar residues. The disordered stretch occupies residues 1–21 (MTSTLPTANTPDPASLMPSVR). Lys111 bears the N6-(pyridoxal phosphate)lysine mark.

Belongs to the TrpB family. Tetramer of two alpha and two beta chains. Requires pyridoxal 5'-phosphate as cofactor.

It carries out the reaction (1S,2R)-1-C-(indol-3-yl)glycerol 3-phosphate + L-serine = D-glyceraldehyde 3-phosphate + L-tryptophan + H2O. The protein operates within amino-acid biosynthesis; L-tryptophan biosynthesis; L-tryptophan from chorismate: step 5/5. In terms of biological role, the beta subunit is responsible for the synthesis of L-tryptophan from indole and L-serine. This Synechococcus sp. (strain CC9311) protein is Tryptophan synthase beta chain.